The sequence spans 122 residues: Large ribosomal subunit protein uL14 (122 aa).

Belongs to the universal ribosomal protein uL14 family. Part of the 50S ribosomal subunit. Forms a cluster with proteins L3 and L19. In the 70S ribosome, L14 and L19 interact and together make contacts with the 16S rRNA in bridges B5 and B8.

Functionally, binds to 23S rRNA. Forms part of two intersubunit bridges in the 70S ribosome. This is Large ribosomal subunit protein uL14 from Beijerinckia indica subsp. indica (strain ATCC 9039 / DSM 1715 / NCIMB 8712).